The sequence spans 109 residues: Elongin-C (109 aa).

The protein belongs to the SKP1 family.

The protein resides in the nucleus. Its function is as follows. SIII, also known as elongin, is a general transcription elongation factor that increases the RNA polymerase II transcription elongation past template-encoded arresting sites. Subunit A is transcriptionally active and its transcription activity is strongly enhanced by binding to the dimeric complex of the SIII regulatory subunits B and C (elongin BC complex). The elongin BC complex seems to be involved as an adapter protein in the proteasomal degradation of target proteins via different E3 ubiquitin ligase complexes. This chain is Elongin-C (tceb1), found in Dictyostelium discoideum (Social amoeba).